The following is a 122-amino-acid chain: uncharacterized protein (122 aa).

Helical transmembrane passes span 9-29 (VATV…STWV) and 60-80 (LFSF…CLIM).

It localises to the cytoplasm. The protein localises to the membrane. This is an uncharacterized protein from Schizosaccharomyces pombe (strain 972 / ATCC 24843) (Fission yeast).